We begin with the raw amino-acid sequence, 450 residues long: Glucose-6-phosphate isomerase (450 aa).

Thr39 is modified (phosphothreonine). The Proton donor role is filled by Glu291. Residues His312 and Lys426 contribute to the active site.

Belongs to the GPI family.

The protein resides in the cytoplasm. It catalyses the reaction alpha-D-glucose 6-phosphate = beta-D-fructose 6-phosphate. It participates in carbohydrate biosynthesis; gluconeogenesis. Its pathway is carbohydrate degradation; glycolysis; D-glyceraldehyde 3-phosphate and glycerone phosphate from D-glucose: step 2/4. In terms of biological role, catalyzes the reversible isomerization of glucose-6-phosphate to fructose-6-phosphate. This Bacillus anthracis protein is Glucose-6-phosphate isomerase.